Reading from the N-terminus, the 185-residue chain is p53 apoptosis effector related to PMP-22 (185 aa).

Helical transmembrane passes span 13 to 33 (WILP…IAAQ), 74 to 94 (VAAL…ISLV), 105 to 125 (LPFI…ALII), and 143 to 163 (WAYG…ILFC).

It belongs to the TMEM47 family.

It is found in the cell junction. Its subcellular location is the desmosome. The protein resides in the cell membrane. It localises to the cytoplasm. Its function is as follows. Component of intercellular desmosome junctions. Positively regulates apoptosis in the early-stage embryo in response to UV irradiation, this is partially dependent on tp53 activation. Required for the survival of cell populations in the developing notochord and skin, therefore required for normal embryogenesis beyond 30 hpf. Acts as a positive regulator of endothelial cell apoptosis in response to blood flow-derived shear stress. The sequence is that of p53 apoptosis effector related to PMP-22 from Danio rerio (Zebrafish).